A 665-amino-acid polypeptide reads, in one-letter code: F-box/LRR-repeat protein 3 (665 aa).

Residues 11–60 enclose the F-box domain; sequence KPFDLLSEELVFIILDLISPNPSDLKSFSLTCKSFYQLESKHRGSLKPLR. LRR repeat units follow at residues 61-81, 82-108, 109-134, 135-159, 160-185, 186-211, 214-235, 236-261, 262-287, 288-312, 313-338, 339-364, 365-390, 391-416, 419-440, 441-466, 467-492, 493-517, 518-543, 544-569, and 594-619; these read SDYL…DLTF, CPRV…DLSR, SGSF…DLSN, ATEM…KLGR, CKML…SLKW, CVGV…DLSY, ITGK…LLEG, CFGV…DASS, CQNL…DLSH, CSSV…IRLD, GCSV…SLSK, CVSV…DITC, CRKL…KMES, CSLV…DLTD, IDDE…KLGI, CLNI…DLYR, SVGI…NISY, CQDI…ESRG, CPNI…DLKK, CPSI…NVSD, and SSGL…KLHA.

In Arabidopsis thaliana (Mouse-ear cress), this protein is F-box/LRR-repeat protein 3 (FBL3).